The sequence spans 491 residues: Transcription factor AP-2-alpha (491 aa).

Residues 74 to 161 are disordered; the sequence is GASNGTARLP…GQRQSQESGL (88 aa). The short motif at 111–116 is the PPxY motif element; sequence YFPPPY. Composition is skewed to low complexity over residues 119-128 and 142-155; these read IYPQSQDPYS and QPQP…GQRQ. Glycyl lysine isopeptide (Lys-Gly) (interchain with G-Cter in SUMO2) cross-links involve residues lysine 231 and lysine 238. Serine 293 carries the phosphoserine; by PKA modification. The segment at 334–464 is H-S-H (helix-span-helix), dimerization; the sequence is RRKAANVTLL…YLTEALKAMD (131 aa). Residues 468-481 are compositionally biased toward polar residues; sequence LSNNPNSHTDNSAK. The tract at residues 468-491 is disordered; the sequence is LSNNPNSHTDNSAKSSDKEEKHRK. Residues 482 to 491 are compositionally biased toward basic and acidic residues; it reads SSDKEEKHRK.

This sequence belongs to the AP-2 family. In terms of assembly, binds DNA as a dimer. Can form homodimers or heterodimers with other AP-2 family members. Interacts with WWOX. Interacts with CITED4. Interacts with UBE2I. Interacts with RALBP1 in a complex also containing EPN1 and NUMB during interphase and mitosis. Interacts with KCTD1; this interaction represses transcription activation. Interacts (via C-terminus) with CITED2 (via C-terminus); the interaction stimulates TFAP2A-transcriptional activation. Interacts (via N-terminus) with EP300 (via N-terminus); the interaction requires CITED2. Interacts with KCTD15; this interaction inhibits TFAP2A transcriptional activation.

Its subcellular location is the nucleus. Functionally, sequence-specific DNA-binding protein that interacts with inducible viral and cellular enhancer elements to regulate transcription of selected genes. AP-2 factors bind to the consensus sequence 5'-GCCNNNGGC-3' and activate genes involved in a large spectrum of important biological functions including proper eye, face, body wall, limb and neural tube development. They also suppress a number of genes including MCAM/MUC18, C/EBP alpha and MYC. AP-2-alpha is the only AP-2 protein required for early morphogenesis of the lens vesicle. Together with the CITED2 coactivator, stimulates the PITX2 P1 promoter transcription activation. Associates with chromatin to the PITX2 P1 promoter region. In Ovis aries (Sheep), this protein is Transcription factor AP-2-alpha (TFAP2A).